The following is a 115-amino-acid chain: Iron-sulfur cluster insertion protein ErpA (115 aa).

The iron-sulfur cluster site is built by C43, C107, and C109.

It belongs to the HesB/IscA family. In terms of assembly, homodimer. It depends on iron-sulfur cluster as a cofactor.

Functionally, required for insertion of 4Fe-4S clusters for at least IspG. This Buchnera aphidicola subsp. Baizongia pistaciae (strain Bp) protein is Iron-sulfur cluster insertion protein ErpA.